A 940-amino-acid chain; its full sequence is UvrABC system protein A (940 aa).

G31–S38 is a binding site for ATP. The segment at C252–C279 adopts a C4-type zinc-finger fold. ABC transporter domains are found at residues W309–L586 and K606–K936. G639–S646 provides a ligand contact to ATP. The C4-type zinc-finger motif lies at C739–C765.

This sequence belongs to the ABC transporter superfamily. UvrA family. In terms of assembly, forms a heterotetramer with UvrB during the search for lesions.

The protein localises to the cytoplasm. Functionally, the UvrABC repair system catalyzes the recognition and processing of DNA lesions. UvrA is an ATPase and a DNA-binding protein. A damage recognition complex composed of 2 UvrA and 2 UvrB subunits scans DNA for abnormalities. When the presence of a lesion has been verified by UvrB, the UvrA molecules dissociate. The polypeptide is UvrABC system protein A (Vibrio cholerae serotype O1 (strain ATCC 39315 / El Tor Inaba N16961)).